The primary structure comprises 1364 residues: Collagen alpha-2(I) chain (1364 aa).

Positions 1 to 22 are cleaved as a signal peptide; sequence MLSFVDTRTLLLLAVTSCLATC. Position 23 is a pyrrolidone carboxylic acid (glutamine 23). Positions 23-79 are cleaved as a propeptide — N-terminal propeptide; sequence QSLQEATARKGPSGDRGPRGERGPPGPPGRDGDDGIPGPPGPPGPPGPPGLGGNFAA. Residues 26–1128 are disordered; that stretch reads QEATARKGPS…QPRSPTSLRP (1103 aa). A compositionally biased stretch (basic and acidic residues) spans 34–44; it reads PSGDRGPRGER. Residues 59–71 are compositionally biased toward pro residues; the sequence is PGPPGPPGPPGPP. At glutamine 80 the chain carries Pyrrolidone carboxylic acid. Allysine is present on lysine 84. The span at 93 to 130 shows a compositional bias: low complexity; it reads LMGPRGPPGASGAPGPQGFQGPPGEPGEPGQTGPAGAR. Proline 100, proline 106, proline 115, proline 118, proline 121, proline 133, proline 136, proline 145, proline 151, proline 166, proline 169, and proline 172 each carry 4-hydroxyproline. Positions 139–153 are enriched in basic and acidic residues; the sequence is AGEDGHPGKPGRPGE. Position 175 is a 5-hydroxylysine; alternate (lysine 175). The O-linked (Gal...) hydroxylysine; alternate glycan is linked to lysine 175. 4-hydroxyproline occurs at positions 190 and 193. Lysine 196 is modified (5-hydroxylysine). 4-hydroxyproline is present on residues proline 199, proline 202, proline 208, proline 217, proline 226, proline 253, proline 256, and proline 259. Residues 223 to 252 show a composition bias toward low complexity; it reads VGAPGPAGARGSDGSVGPVGPAGPIGSAGP. 5-hydroxylysine is present on lysine 262. 4-hydroxyproline occurs at positions 271, 286, 295, and 304. The span at 277 to 291 shows a compositional bias: low complexity; the sequence is AGPRGEVGLPGLSGP. Low complexity predominate over residues 298-319; sequence PGANGLPGAKGAAGLPGVAGAP. Lysine 307 is modified (5-hydroxylysine). Proline 313, proline 319, proline 322, proline 328, and proline 346 each carry 4-hydroxyproline. The span at 328 to 343 shows a compositional bias: low complexity; sequence PGPVGAAGATGARGLV. Residue lysine 352 is modified to 5-hydroxylysine. Proline 361, proline 367, proline 370, proline 391, proline 394, proline 400, proline 406, proline 439, and proline 442 each carry 4-hydroxyproline. Residues 396–406 are compositionally biased toward low complexity; the sequence is LRGNPGSRGLP. Composition is skewed to low complexity over residues 468–487 and 511–535; these read LPGIDGRPGPIGPAGARGEP and AGLAGARGAPGPDGNNGAQGPPGLQ. The segment covering 536-545 has biased composition (gly residues); sequence GVQGGKGEQG. Low complexity-rich tracts occupy residues 592–609, 621–643, 666–688, and 715–735; these read PGESGAAGPTGPIGSRGP, EPGVVGAPGTAGPSGPSGLPGER, SPGRDGARGAPGAIGAPGPAGAN, and VGPAGPNGFAGPAGAAGQPGA. Positions 736-745 are enriched in basic and acidic residues; the sequence is KGERGTKGPK. Over residues 748–763 the composition is skewed to low complexity; sequence NGPVGPTGPVGAAGPS. Residues 773 to 782 show a composition bias toward gly residues; it reads GSRGDGGPPG. Composition is skewed to low complexity over residues 783 to 793, 861 to 874, 891 to 930, 948 to 961, and 978 to 999; these read ATGFPGAAGRT, PQGLLGAPGFLGLP, EPGPLGIAGPPGARGPPGNVGNPGVNGAPGEAGRDGNPGN, YPGNAGPVGAAGAP, and EPGPAGAVGPAGAVGPRGPSGP. The segment covering 1003–1014 has biased composition (basic and acidic residues); sequence RGDKGEPGDKGP. Residues 1087–1101 are compositionally biased toward pro residues; that stretch reads AGPPGPPGPPGPPGP. Positions 1118 to 1364 are cleaved as a propeptide — C-terminal propeptide; it reads DQPRSPTSLR…RLNIGPVCFK (247 aa). Residues 1131–1364 form the Fibrillar collagen NC1 domain; the sequence is YEVDATLKSL…RLNIGPVCFK (234 aa). 3 disulfide bridges follow: cysteine 1161–cysteine 1193, cysteine 1201–cysteine 1362, and cysteine 1270–cysteine 1315. Residues aspartate 1179, asparagine 1181, glutamine 1182, cysteine 1184, and aspartate 1187 each coordinate Ca(2+). An N-linked (GlcNAc...) asparagine glycan is attached at asparagine 1265.

This sequence belongs to the fibrillar collagen family. As to quaternary structure, trimers of one alpha 2(I) and two alpha 1(I) chains. Interacts (via C-terminus) with TMEM131 (via PapD-L domain); the interaction is direct and is involved in assembly and TRAPPIII ER-to-Golgi transport complex-dependent secretion of collagen. Post-translationally, prolines at the third position of the tripeptide repeating unit (G-X-Y) are hydroxylated in some or all of the chains. In terms of tissue distribution, forms the fibrils of tendon, ligaments and bones. In bones the fibrils are mineralized with calcium hydroxyapatite.

It is found in the secreted. The protein resides in the extracellular space. The protein localises to the extracellular matrix. Functionally, type I collagen is a member of group I collagen (fibrillar forming collagen). The sequence is that of Collagen alpha-2(I) chain (COL1A2) from Bos taurus (Bovine).